A 570-amino-acid polypeptide reads, in one-letter code: Carotenoid cleavage dioxygenase 8, chloroplastic (570 aa).

A chloroplast-targeting transit peptide spans methionine 1–arginine 56. Fe cation contacts are provided by histidine 254, histidine 305, histidine 372, and histidine 563.

The protein belongs to the carotenoid oxygenase family. Fe(2+) is required as a cofactor. As to expression, expressed in flowers, siliques, inflorescence stems, petiole and leaves, and at a much higher level in roots.

It is found in the plastid. The protein resides in the chloroplast. The enzyme catalyses 9-cis-10'-apo-beta-carotenal + 2 O2 = (2E,4E,6E)-7-hydroxy-4-methylhepta-2,4,6-trienal + (11R)-carlactone. The catalysed reaction is all-trans-10'-apo-beta-carotenal + O2 = (2E,4E,6E)-4-methylocta-2,4,6-trienedial + 13-apo-beta-carotenone. Functionally, involved in strigolactones biosynthesis by cleaving the C(27) 9-cis-10'-apo-beta-carotenal produced by CCD7. Produces the C(19) carlactone and a C(8) hydroxyaldehyde. Also shows lower activity with all-trans-10'-apo-beta-carotenal producing a C(9) dialdehyde and the C(18) 13-apo-beta-carotenone. Strigolactones are hormones that inhibit tillering and shoot branching through the MAX-dependent pathway, contribute to the regulation of shoot architectural response to phosphate-limiting conditions and function as rhizosphere signal that stimulates hyphal branching of arbuscular mycorrhizal fungi and trigger seed germination of root parasitic weeds. Also active on other carotenoid substrates like licopene or zeaxanthin. In Arabidopsis thaliana (Mouse-ear cress), this protein is Carotenoid cleavage dioxygenase 8, chloroplastic.